A 300-amino-acid chain; its full sequence is Tyrosine recombinase XerC (300 aa).

In terms of domain architecture, Core-binding (CB) spans 2-88 (ENVNFTLNLF…SLRSFYKFLL (87 aa)). The 186-residue stretch at 109 to 294 (KIPHFLYPDE…TKDHLRYVYL (186 aa)) folds into the Tyr recombinase domain. Catalysis depends on residues R149, K173, H246, R249, and H272. Y281 (O-(3'-phospho-DNA)-tyrosine intermediate) is an active-site residue.

This sequence belongs to the 'phage' integrase family. XerC subfamily. In terms of assembly, forms a cyclic heterotetrameric complex composed of two molecules of XerC and two molecules of XerD.

The protein localises to the cytoplasm. Its function is as follows. Site-specific tyrosine recombinase, which acts by catalyzing the cutting and rejoining of the recombining DNA molecules. The XerC-XerD complex is essential to convert dimers of the bacterial chromosome into monomers to permit their segregation at cell division. It also contributes to the segregational stability of plasmids. In Anoxybacillus flavithermus (strain DSM 21510 / WK1), this protein is Tyrosine recombinase XerC.